A 497-amino-acid chain; its full sequence is Cytochrome P450 2D6 (497 aa).

Residue Asp-301 participates in substrate binding. Cys-443 is a heme binding site.

The protein belongs to the cytochrome P450 family. Heme serves as cofactor.

Its subcellular location is the endoplasmic reticulum membrane. The protein resides in the microsome membrane. The catalysed reaction is (5Z,8Z,11Z,14Z)-eicosatetraenoate + reduced [NADPH--hemoprotein reductase] + O2 = (8R,9S)-epoxy-(5Z,11Z,14Z)-eicosatrienoate + oxidized [NADPH--hemoprotein reductase] + H2O + H(+). It carries out the reaction (5Z,8Z,11Z,14Z)-eicosatetraenoate + reduced [NADPH--hemoprotein reductase] + O2 = (11R,12S)-epoxy-(5Z,8Z,14Z)-eicosatrienoate + oxidized [NADPH--hemoprotein reductase] + H2O + H(+). It catalyses the reaction (5Z,8Z,11Z,14Z)-eicosatetraenoate + reduced [NADPH--hemoprotein reductase] + O2 = (14S,15R)-epoxy-(5Z,8Z,11Z)-eicosatrienoate + oxidized [NADPH--hemoprotein reductase] + H2O + H(+). The enzyme catalyses N-(5Z,8Z,11Z,14Z-eicosatetraenoyl)-ethanolamine + reduced [NADPH--hemoprotein reductase] + O2 = N-(8,9-epoxy-5Z,11Z,14Z-eicosatrienoyl)-ethanolamine + oxidized [NADPH--hemoprotein reductase] + H2O + H(+). The catalysed reaction is N-(5Z,8Z,11Z,14Z-eicosatetraenoyl)-ethanolamine + reduced [NADPH--hemoprotein reductase] + O2 = N-(11,12-epoxy-5Z,8Z,14Z-eicosatrienoyl)-ethanolamine + oxidized [NADPH--hemoprotein reductase] + H2O + H(+). It carries out the reaction N-(5Z,8Z,11Z,14Z-eicosatetraenoyl)-ethanolamine + reduced [NADPH--hemoprotein reductase] + O2 = N-(14,15-epoxy-5Z,8Z,11Z-eicosatrienoyl)-ethanolamine + oxidized [NADPH--hemoprotein reductase] + H2O + H(+). It catalyses the reaction N-(5Z,8Z,11Z,14Z-eicosatetraenoyl)-ethanolamine + reduced [NADPH--hemoprotein reductase] + O2 = N-(20-hydroxy-5Z,8Z,11Z,14Z-eicosatetraenoyl)-ethanolamine + oxidized [NADPH--hemoprotein reductase] + H2O + H(+). The enzyme catalyses (5Z,8Z,11Z,14Z,17Z)-eicosapentaenoate + reduced [NADPH--hemoprotein reductase] + O2 = (17S,18R)-epoxy-(5Z,8Z,11Z,14Z)-eicosatetraenoate + oxidized [NADPH--hemoprotein reductase] + H2O + H(+). The catalysed reaction is (4Z,7Z,10Z,13Z,16Z,19Z)-docosahexaenoate + reduced [NADPH--hemoprotein reductase] + O2 = (19R,20S)-epoxy-(4Z,7Z,10Z,13Z,16Z)-docosapentaenoate + oxidized [NADPH--hemoprotein reductase] + H2O + H(+). It carries out the reaction (4Z,7Z,10Z,13Z,16Z,19Z)-docosahexaenoate + reduced [NADPH--hemoprotein reductase] + O2 = (19S,20R)-epoxy-(4Z,7Z,10Z,13Z,16Z)-docosapentaenoate + oxidized [NADPH--hemoprotein reductase] + H2O + H(+). It catalyses the reaction cholesterol + reduced [NADPH--hemoprotein reductase] + O2 = 25-hydroxycholesterol + oxidized [NADPH--hemoprotein reductase] + H2O + H(+). The enzyme catalyses all-trans-retinol + reduced [NADPH--hemoprotein reductase] + O2 = all-trans-retinal + oxidized [NADPH--hemoprotein reductase] + 2 H2O + H(+). It functions in the pathway cofactor metabolism; retinol metabolism. It participates in lipid metabolism; fatty acid metabolism. The protein operates within steroid metabolism; cholesterol metabolism. Its function is as follows. A cytochrome P450 monooxygenase involved in the metabolism of fatty acids, steroids and retinoids. Mechanistically, uses molecular oxygen inserting one oxygen atom into a substrate, and reducing the second into a water molecule, with two electrons provided by NADPH via cytochrome P450 reductase (NADPH--hemoprotein reductase). Catalyzes the epoxidation of double bonds of polyunsaturated fatty acids (PUFA). Metabolizes endocannabinoid arachidonoylethanolamide (anandamide) to 20-hydroxyeicosatetraenoic acid ethanolamide (20-HETE-EA) and 8,9-, 11,12-, and 14,15-epoxyeicosatrienoic acid ethanolamides (EpETrE-EAs), potentially modulating endocannabinoid system signaling. Catalyzes the hydroxylation of carbon-hydrogen bonds. Metabolizes cholesterol toward 25-hydroxycholesterol, a physiological regulator of cellular cholesterol homeostasis. Catalyzes the oxidative transformations of all-trans retinol to all-trans retinal, a precursor for the active form all-trans-retinoic acid. Also involved in the oxidative metabolism of drugs such as antiarrhythmics, adrenoceptor antagonists, and tricyclic antidepressants. This is Cytochrome P450 2D6 from Homo sapiens (Human).